The sequence spans 771 residues: DNA helicase/primase complex-associated protein (771 aa).

The protein belongs to the herpesviridae HEPA family. In terms of assembly, associates with the primase and the helicase to form the helicase-primase complex. Interacts with the origin-binding protein. Interacts with the polymerase catalytic subunit.

It localises to the host nucleus. In terms of biological role, component of the helicase/primase complex. Unwinds the DNA at the replication forks and generates single-stranded DNA for both leading and lagging strand synthesis. The primase synthesizes short RNA primers on the lagging strand that the polymerase presumably elongates using dNTPs. The primase-associated factor has no known catalytic activity in the complex and may serve to facilitate the formation of the replisome by directly interacting with the origin-binding protein and the polymerase. This Homo sapiens (Human) protein is DNA helicase/primase complex-associated protein.